Reading from the N-terminus, the 424-residue chain is Enolase (424 aa).

Gln-163 is a binding site for (2R)-2-phosphoglycerate. The active-site Proton donor is the Glu-204. Positions 241, 284, and 311 each coordinate Mg(2+). (2R)-2-phosphoglycerate is bound by residues Lys-336, Arg-365, Ser-366, and Lys-387. The active-site Proton acceptor is Lys-336.

The protein belongs to the enolase family. It depends on Mg(2+) as a cofactor.

The protein localises to the cytoplasm. It localises to the secreted. Its subcellular location is the cell surface. The enzyme catalyses (2R)-2-phosphoglycerate = phosphoenolpyruvate + H2O. The protein operates within carbohydrate degradation; glycolysis; pyruvate from D-glyceraldehyde 3-phosphate: step 4/5. In terms of biological role, catalyzes the reversible conversion of 2-phosphoglycerate (2-PG) into phosphoenolpyruvate (PEP). It is essential for the degradation of carbohydrates via glycolysis. In Dictyoglomus turgidum (strain DSM 6724 / Z-1310), this protein is Enolase.